The following is a 420-amino-acid chain: Coiled-coil domain-containing protein 85C (420 aa).

Ala-2 carries the N-acetylalanine modification. Coiled-coil stretches lie at residues 26–92 and 122–165; these read ELLR…RELC and HEVA…LAAA. Residues 165 to 271 are disordered; the sequence is AGGAGGGGGG…NGLHDPSSTY (107 aa). Residues 166–176 show a composition bias toward gly residues; sequence GGAGGGGGGAG. Ser-179 carries the phosphoserine modification. A compositionally biased stretch (low complexity) spans 185 to 212; the sequence is ASLSGPLAGSAAGSGARDVGDGSSTSSA. Position 247 is a phosphoserine (Ser-247).

Belongs to the CCDC85 family. In terms of assembly, may interact with ARVCF, CTNND1, CTNND2 and PKP4. Predominantly expressed on the surface of the lateral ventricular walls of the developing cerebral cortex.

It is found in the cell junction. The protein localises to the tight junction. Its subcellular location is the adherens junction. May play a role in cell-cell adhesion and epithelium development through its interaction with proteins of the beta-catenin family. May play an important role in cortical development, especially in the maintenance of radial glia. The sequence is that of Coiled-coil domain-containing protein 85C (Ccdc85c) from Mus musculus (Mouse).